The chain runs to 71 residues: Sec-independent protein translocase protein TatA (71 aa).

A helical membrane pass occupies residues 9–29; sequence LLLILAIVVILFGASRLPALG. The interval 43-71 is disordered; the sequence is FGGEDEKPTASGNGSTPTQSSSDQGSKQA. Over residues 52-71 the composition is skewed to polar residues; it reads ASGNGSTPTQSSSDQGSKQA.

It belongs to the TatA/E family. In terms of assembly, the Tat system comprises two distinct complexes: a TatABC complex, containing multiple copies of TatA, TatB and TatC subunits, and a separate TatA complex, containing only TatA subunits. Substrates initially bind to the TatABC complex, which probably triggers association of the separate TatA complex to form the active translocon.

It is found in the cell inner membrane. In terms of biological role, part of the twin-arginine translocation (Tat) system that transports large folded proteins containing a characteristic twin-arginine motif in their signal peptide across membranes. TatA could form the protein-conducting channel of the Tat system. This is Sec-independent protein translocase protein TatA from Anaeromyxobacter dehalogenans (strain 2CP-C).